Here is a 598-residue protein sequence, read N- to C-terminus: Nuclear receptor subfamily 4immunitygroup A member 1 (598 aa).

Disordered regions lie at residues 1-44, 131-158, 177-206, and 221-265; these read MPCI…EAAP, YYGS…DGSF, LPKA…AQSP, and GESY…GSEG. Residues 134–145 show a composition bias toward low complexity; sequence SPCSAPSPSTPS. The required for nuclear import stretch occupies residues 171–466; the sequence is RAWTEQLPKA…PGEGKLIFCS (296 aa). The nuclear receptor DNA-binding region spans 264–339; the sequence is EGRCAVCGDN…VGMVKEVVRT (76 aa). 2 consecutive NR C4-type zinc fingers follow at residues 267 to 287 and 303 to 327; these read CAVC…CEGC and CLAN…FQKC. The segment at 268-354 is required for binding NBRE-containing DNA; that stretch reads AVCGDNASCQ…RRGRLPSKPK (87 aa). The required for the interaction with RXRA stretch occupies residues 299–361; the sequence is AKYICLANKD…KPKQPPDASP (63 aa). At S341 the chain carries Phosphoserine; by PKA. Residues 341-361 form a disordered region; sequence SLKGRRGRLPSKPKQPPDASP. At S351 the chain carries Phosphoserine. The NR LBD domain occupies 360-595; the sequence is SPANLLTSLV…PIIDKIFMDT (236 aa). The interval 521-544 is binds lipopolysaccharide; sequence PRRVEELQNRIASCLKEHVAAVAG. The interval 584–595 is AF-2; sequence PPPIIDKIFMDT.

This sequence belongs to the nuclear hormone receptor family. NR4 subfamily. In terms of assembly, binds the NGFI-B response element (NBRE) as a monomer. Binds the Nur response element (NurRE), consisting of two inverse NBRE-related octanucleotide repeats separated by 6 base-pairs, as a dimer. Interacts (via N-terminus) with NLRP3 (via LRR repeat domain); the interaction is direct, requires binding of NR4A1/Nur77 to NBRE-containing dsDNA and lipopolysaccharide, and leads to non-canonical NLRP3 inflammasome activation. Interacts with GADD45GIP1. Interacts with STK11. Interacts with IFI27. Heterodimer (via DNA-binding domain) with RXRA (via C-terminus); DNA-binding of the heterodimer is enhanced by 9-cis retinoic acid. Competes for the RXRA interaction with EP300 and thereby attenuates EP300 mediated acetylation of RXRA. Interacts with NCOA1. Interacts with NCOA2. Interacts with NCOA3. It depends on Zn(2+) as a cofactor. In terms of processing, phosphorylated at Ser-351 by RPS6KA1 and RPS6KA3 in response to mitogenic or stress stimuli. Post-translationally, acetylated by p300/CBP, acetylation increases stability. Deacetylated by HDAC1. In terms of tissue distribution, fetal muscle and adult liver, brain and thyroid.

The protein localises to the nucleus. The protein resides in the cytoplasm. It localises to the cytosol. It is found in the mitochondrion. Its activity is regulated as follows. Its transcription factor activity is activated by binding cytosporone B (Csn-B) via its ligand-binding (NR LBD) domain and stimulates recruitment of coactivators NCOA1 and NCOA2, but not NCOA3, to promoters. Csn-B-binding is also accompanied by its translocation to the mitochondrion. Its transcription factor activity is activated by corticotropin-releasing hormone (CRH) and forskolin. Not activated by binding cytosporone C (Csn-C). In terms of biological role, orphan nuclear receptor. Binds the NGFI-B response element (NBRE) 5'-AAAGGTCA-3'. Binds 9-cis-retinoic acid outside of its ligand-binding (NR LBD) domain. Participates in energy homeostasis by sequestrating the kinase STK11 in the nucleus, thereby attenuating cytoplasmic AMPK activation. Regulates the inflammatory response in macrophages by regulating metabolic adaptations during inflammation, including repressing the transcription of genes involved in the citric acid cycle (TCA). Inhibits NF-kappa-B signaling by binding to low-affinity NF-kappa-B binding sites, such as at the IL2 promoter. May act concomitantly with NR4A2 in regulating the expression of delayed-early genes during liver regeneration. Plays a role in the vascular response to injury. Functionally, in the cytosol, upon its detection of both bacterial lipopolysaccharide (LPS) and NBRE-containing mitochondrial DNA released by GSDMD pores during pyroptosis, it promotes non-canonical NLRP3 inflammasome activation by stimulating association of NLRP3 and NEK7. In Homo sapiens (Human), this protein is Nuclear receptor subfamily 4immunitygroup A member 1 (NR4A1).